Reading from the N-terminus, the 290-residue chain is Eukaryotic translation initiation factor 3 subunit G (290 aa).

2 disordered regions span residues 1–35 and 157–200; these read MSRL…DGTK and ESTG…GERM. The RRM domain occupies 210 to 288; sequence ATLRVTNVSE…LILRVEFAKR (79 aa).

This sequence belongs to the eIF-3 subunit G family. Component of the eukaryotic translation initiation factor 3 (eIF-3) complex.

It localises to the cytoplasm. In terms of biological role, RNA-binding component of the eukaryotic translation initiation factor 3 (eIF-3) complex, which is involved in protein synthesis of a specialized repertoire of mRNAs and, together with other initiation factors, stimulates binding of mRNA and methionyl-tRNAi to the 40S ribosome. The eIF-3 complex specifically targets and initiates translation of a subset of mRNAs involved in cell proliferation. This subunit can bind 18S rRNA. The protein is Eukaryotic translation initiation factor 3 subunit G (tif35) of Aspergillus clavatus (strain ATCC 1007 / CBS 513.65 / DSM 816 / NCTC 3887 / NRRL 1 / QM 1276 / 107).